The chain runs to 201 residues: Rac-like GTP-binding protein ARAC2 (201 aa).

13-20 serves as a coordination point for GTP; the sequence is GDGAVGKT. An Effector region motif is present at residues 35–43; the sequence is YVPTVFDNF. GTP-binding positions include 60-64 and 118-121; these read DTAGQ and TKLD. Cysteine methyl ester is present on Cys198. Residue Cys198 is the site of S-geranylgeranyl cysteine attachment. A propeptide spans 199–201 (removed in mature form); the sequence is FFL.

Belongs to the small GTPase superfamily. Rho family. As to expression, expressed exclusively in the root, hypocotyl and stem.

Its subcellular location is the cytoplasm. It is found in the membrane. Its function is as follows. Inactive GDP-bound Rho GTPases reside in the cytosol, are found in a complex with Rho GDP-dissociation inhibitors (Rho GDIs), and are released from the GDI protein in order to translocate to membranes upon activation. This is Rac-like GTP-binding protein ARAC2 (ARAC2) from Arabidopsis thaliana (Mouse-ear cress).